Reading from the N-terminus, the 22-residue chain is Brevinin-2LTa (22 aa).

As to expression, expressed by the skin glands.

The protein resides in the secreted. Has antibacterial activity. The protein is Brevinin-2LTa of Rana latastei (Italian agile frog).